Reading from the N-terminus, the 271-residue chain is 3-methyl-2-oxobutanoate hydroxymethyltransferase (271 aa).

Residues Asp51 and Asp90 each coordinate Mg(2+). Residues 51–52, Asp90, and Lys119 each bind 3-methyl-2-oxobutanoate; that span reads DS. Glu121 contributes to the Mg(2+) binding site. Catalysis depends on Glu188, which acts as the Proton acceptor.

Belongs to the PanB family. Homodecamer; pentamer of dimers. It depends on Mg(2+) as a cofactor.

It localises to the cytoplasm. The enzyme catalyses 3-methyl-2-oxobutanoate + (6R)-5,10-methylene-5,6,7,8-tetrahydrofolate + H2O = 2-dehydropantoate + (6S)-5,6,7,8-tetrahydrofolate. It participates in cofactor biosynthesis; (R)-pantothenate biosynthesis; (R)-pantoate from 3-methyl-2-oxobutanoate: step 1/2. In terms of biological role, catalyzes the reversible reaction in which hydroxymethyl group from 5,10-methylenetetrahydrofolate is transferred onto alpha-ketoisovalerate to form ketopantoate. This Aromatoleum aromaticum (strain DSM 19018 / LMG 30748 / EbN1) (Azoarcus sp. (strain EbN1)) protein is 3-methyl-2-oxobutanoate hydroxymethyltransferase.